Here is a 508-residue protein sequence, read N- to C-terminus: Lysine--tRNA ligase (508 aa).

Mg(2+) contacts are provided by Glu418 and Glu425.

The protein belongs to the class-II aminoacyl-tRNA synthetase family. Homodimer. The cofactor is Mg(2+).

The protein localises to the cytoplasm. It carries out the reaction tRNA(Lys) + L-lysine + ATP = L-lysyl-tRNA(Lys) + AMP + diphosphate. The polypeptide is Lysine--tRNA ligase (Burkholderia cenocepacia (strain HI2424)).